Consider the following 118-residue polypeptide: MNYIQKYEKKQIKKTIPIFKSGDTIIIKVWIVEGTKKRIQLFEGIVIAIRNRGFNSSFCVRKVSNGEGIERVFPKYSPIIEEIIVKRHGDVKKSKLYYLRNRIGKSAKIRELISKKTS.

Belongs to the bacterial ribosomal protein bL19 family.

Its function is as follows. This protein is located at the 30S-50S ribosomal subunit interface and may play a role in the structure and function of the aminoacyl-tRNA binding site. This is Large ribosomal subunit protein bL19 from Buchnera aphidicola subsp. Baizongia pistaciae (strain Bp).